The chain runs to 446 residues: Phosphoglucosamine mutase (446 aa).

The active-site Phosphoserine intermediate is the Ser103. Positions 103, 242, 244, and 246 each coordinate Mg(2+). Ser103 carries the phosphoserine modification.

It belongs to the phosphohexose mutase family. The cofactor is Mg(2+). Post-translationally, activated by phosphorylation.

The catalysed reaction is alpha-D-glucosamine 1-phosphate = D-glucosamine 6-phosphate. In terms of biological role, catalyzes the conversion of glucosamine-6-phosphate to glucosamine-1-phosphate. The chain is Phosphoglucosamine mutase from Corynebacterium urealyticum (strain ATCC 43042 / DSM 7109).